The sequence spans 250 residues: Triosephosphate isomerase (250 aa).

9-11 (NWK) serves as a coordination point for substrate. Histidine 95 acts as the Electrophile in catalysis. The active-site Proton acceptor is glutamate 167. Residues glycine 173, serine 212, and 233 to 234 (GG) contribute to the substrate site.

This sequence belongs to the triosephosphate isomerase family. In terms of assembly, homodimer.

Its subcellular location is the cytoplasm. The enzyme catalyses D-glyceraldehyde 3-phosphate = dihydroxyacetone phosphate. Its pathway is carbohydrate biosynthesis; gluconeogenesis. It functions in the pathway carbohydrate degradation; glycolysis; D-glyceraldehyde 3-phosphate from glycerone phosphate: step 1/1. Involved in the gluconeogenesis. Catalyzes stereospecifically the conversion of dihydroxyacetone phosphate (DHAP) to D-glyceraldehyde-3-phosphate (G3P). This is Triosephosphate isomerase from Psychromonas ingrahamii (strain DSM 17664 / CCUG 51855 / 37).